A 251-amino-acid polypeptide reads, in one-letter code: DNA polymerase sliding clamp 2 (251 aa).

The protein belongs to the PCNA family. Heterotrimer. The subunits circularize to form a toroid; DNA passes through its center. Replication factor C (RFC) is required to load the toroid on the DNA.

Functionally, sliding clamp subunit that acts as a moving platform for DNA processing. Responsible for tethering the catalytic subunit of DNA polymerase and other proteins to DNA during high-speed replication. The sequence is that of DNA polymerase sliding clamp 2 from Aeropyrum pernix (strain ATCC 700893 / DSM 11879 / JCM 9820 / NBRC 100138 / K1).